Consider the following 1366-residue polypeptide: DNA-directed RNA polymerase subunit beta (1366 aa).

This sequence belongs to the RNA polymerase beta chain family. In terms of assembly, the RNAP catalytic core consists of 2 alpha, 1 beta, 1 beta' and 1 omega subunit. When a sigma factor is associated with the core the holoenzyme is formed, which can initiate transcription.

It catalyses the reaction RNA(n) + a ribonucleoside 5'-triphosphate = RNA(n+1) + diphosphate. Functionally, DNA-dependent RNA polymerase catalyzes the transcription of DNA into RNA using the four ribonucleoside triphosphates as substrates. The chain is DNA-directed RNA polymerase subunit beta from Marinomonas sp. (strain MWYL1).